Consider the following 227-residue polypeptide: UPF0173 metal-dependent hydrolase BPUM_2573 (227 aa).

It belongs to the UPF0173 family.

This chain is UPF0173 metal-dependent hydrolase BPUM_2573, found in Bacillus pumilus (strain SAFR-032).